Here is a 277-residue protein sequence, read N- to C-terminus: Putative envelope-preserving system protein Rv2742c (277 aa).

The span at 31–54 shows a compositional bias: basic and acidic residues; it reads RDENRQRHAQVDVQRRRDQPERGQ. 3 disordered regions span residues 31–70, 113–133, and 180–210; these read RDEN…PDGR, QGSP…RLGR, and RQGS…HTAD. Positions 116–133 are enriched in basic residues; it reads PRRRERRRGQTAHQRLGR.

As to quaternary structure, interacts with Rv2743c.

Functionally, involved in preservation of envelope integrity and tolerance to surface stress. Reverses the inhibitory effect of PspA on ClgR activity. Facilitates intracellular growth of M.tuberculosis. This chain is Putative envelope-preserving system protein Rv2742c, found in Mycobacterium tuberculosis (strain ATCC 25618 / H37Rv).